The sequence spans 241 residues: Fatty acid metabolism regulator protein (241 aa).

The HTH gntR-type domain occupies Gln11 to Ile79. A DNA-binding region (H-T-H motif) is located at residues Glu39–Gln58.

As to quaternary structure, homodimer.

The protein localises to the cytoplasm. Its function is as follows. Multifunctional regulator of fatty acid metabolism. The sequence is that of Fatty acid metabolism regulator protein from Pasteurella multocida (strain Pm70).